The primary structure comprises 498 residues: Cytochrome P450 monooxygenase aflU (498 aa).

The chain crosses the membrane as a helical span at residues 5–27 (TVYTSLIGLLVALTVRSIYRVYF). N-linked (GlcNAc...) asparagine glycosylation is found at Asn-259 and Asn-354. Residue Cys-438 participates in heme binding.

The protein belongs to the cytochrome P450 family. The cofactor is heme.

It localises to the membrane. The protein operates within mycotoxin biosynthesis; aflatoxin biosynthesis. Its function is as follows. Cytochrome P450 monooxygenase; part of the gene cluster that mediates the biosynthesis of aflatoxins, a group of polyketide-derived furanocoumarins, and part of the most toxic and carcinogenic compounds among the known mycotoxins. The four major aflatoxins produced by A.parasiticus are aflatoxin B1 (AFB1), aflatoxin B2 (AFB2), aflatoxin G1 (AFG1) and aflatoxin G2 (AFG2). Within the aflatoxin pathway, the cytochrome P450 monooxygenase aflU is involved in the last steps in which OMST is converted to aflatoxins B1 and G1, and DHOMST to aflatoxins B2 and G2. The biosynthesis of aflatoxins begins with the norsolorinic acid synthase aflC that combines a hexanoyl starter unit produced by the fatty acid synthase aflA/aflB and 7 malonyl-CoA extender units to synthesize the precursor NOR. The second step is the conversion of NOR to averantin and requires the norsolorinic acid ketoreductase aflD, which catalyzes the dehydration of norsolorinic acid to form (1'S)-averantin. The norsolorinic acid reductases aflE and aflF may also play a role in the conversion of NOR to AVN. The cytochrome P450 monooxygenase aflG then catalyzes the hydroxylation of AVN to 5'hydroxyaverantin (HAVN). The next step is performed by the 5'-hydroxyaverantin dehydrogenase aflH that transforms HAVN to 5'-oxoaverantin (OAVN) which is further converted to averufin (AVF) by aflK that plays a dual role in the pathway, as a 5'-oxoaverantin cyclase that mediates conversion of 5'-oxoaverantin, as well as a versicolorin B synthase in a later step in the pathway. The averufin oxidase aflI catalyzes the conversion of AVF to versiconal hemiacetal acetate (VHA). VHA is then the substrate for the versiconal hemiacetal acetate esterase aflJ to yield versiconal (VAL). Versicolorin B synthase aflK then converts VAL to versicolorin B (VERB) by closing the bisfuran ring of aflatoxin which is required for DNA-binding, thus giving to aflatoxin its activity as a mutagen. Then, the activity of the versicolorin B desaturase aflL leads to versicolorin A (VERA). A branch point starts from VERB since it can also be converted to dihydrodemethylsterigmatocystin (DMDHST), probably also by aflL, VERA being a precursor for aflatoxins B1 and G1, and DMDHST for aflatoxins B2 and G2. Next, the versicolorin reductase aflM and the cytochrome P450 monooxygenase aflN are involved in conversion of VERA to demethylsterigmatocystin (DMST). AflX and aflY seem also involved in this step, through probable aflX-mediated epoxide ring-opening step following versicolorin A oxidation and aflY-mediated Baeyer-Villiger oxidation required for the formation of the xanthone ring. The methyltransferase aflO then leads to the modification of DMST to sterigmatocystin (ST), and of DMDHST to dihydrosterigmatocystin (DHST). Both ST and DHST are then substrates of the O-methyltransferase aflP to yield O-methylsterigmatocystin (OMST) and dihydro-O-methylsterigmatocystin (DHOMST), respectively. Finally OMST is converted to aflatoxins B1 and G1, and DHOMST to aflatoxins B2 and G2, via the action of several enzymes including O-methylsterigmatocystin oxidoreductase aflQ, the cytochrome P450 monooxygenase aflU, but also the NADH-dependent flavin oxidoreductase nadA which is specifically required for the synthesis of AFG1. This chain is Cytochrome P450 monooxygenase aflU, found in Aspergillus parasiticus (strain ATCC 56775 / NRRL 5862 / SRRC 143 / SU-1).